We begin with the raw amino-acid sequence, 206 residues long: MRPGRLRLLVGLGNPGSKYVGTRHNIGFMALDKLAGQKSVSFRPQTKFHGLMAEVGVGSERVRLLMPQTYMNESGRAIRAAIDWFGLEVDQLLVLVDDMDLPLGRLRLRAQGSAGGHNGLRSAIQHLGTQDFCRLRIGIGAPGCTSEERRARTVSHVLGVFSRQESLLVDQVLDEVLIGLDLIQCLGLERAGNRLNAFQPEGCSAC.

Tyrosine 19 contacts tRNA. Histidine 24 serves as the catalytic Proton acceptor. TRNA-binding residues include tyrosine 70, asparagine 72, and asparagine 118.

Belongs to the PTH family. In terms of assembly, monomer.

Its subcellular location is the cytoplasm. It catalyses the reaction an N-acyl-L-alpha-aminoacyl-tRNA + H2O = an N-acyl-L-amino acid + a tRNA + H(+). In terms of biological role, hydrolyzes ribosome-free peptidyl-tRNAs (with 1 or more amino acids incorporated), which drop off the ribosome during protein synthesis, or as a result of ribosome stalling. Catalyzes the release of premature peptidyl moieties from peptidyl-tRNA molecules trapped in stalled 50S ribosomal subunits, and thus maintains levels of free tRNAs and 50S ribosomes. The chain is Peptidyl-tRNA hydrolase from Prochlorococcus marinus (strain MIT 9303).